The following is a 201-amino-acid chain: MEMEEFAPSYYYYVEPEMGYQPQQPNPMEDLITVYHLDDISRQVARTNEDGTKAVKLRKSYKNQITDLSGKFSSIPNRENRKGGEIAHILFQNNPDMMNQVHRSPDMTDEQWREALMNVDASLFQAPNMDWEVCQSVLSQFDRSYPTEFQNDPNFHVDDLAFDLDGTGKSNAKKRKNRSNGSSMATPNSEMQDDVKRRRLE.

The tract at residues 166 to 201 (GTGKSNAKKRKNRSNGSSMATPNSEMQDDVKRRRLE) is disordered.

It belongs to the Mediator complex subunit 19 family. In terms of assembly, component of the Mediator complex.

Its subcellular location is the nucleus. Component of the Mediator complex, a coactivator involved in the regulated transcription of nearly all RNA polymerase II-dependent genes. Mediator functions as a bridge to convey information from gene-specific regulatory proteins to the basal RNA polymerase II transcription machinery. Mediator is recruited to promoters by direct interactions with regulatory proteins and serves as a scaffold for the assembly of a functional preinitiation complex with RNA polymerase II and the general transcription factors. The sequence is that of Mediator of RNA polymerase II transcription subunit 19 (ROX3) from Candida glabrata (strain ATCC 2001 / BCRC 20586 / JCM 3761 / NBRC 0622 / NRRL Y-65 / CBS 138) (Yeast).